We begin with the raw amino-acid sequence, 414 residues long: Putative F-box/kelch-repeat protein At2g29800 (414 aa).

The tract at residues methionine 1–arginine 61 is disordered. Positions lysine 20–glutamine 35 are enriched in basic and acidic residues. The span at asparagine 40–glutamate 54 shows a compositional bias: acidic residues. The F-box domain occupies proline 58–leucine 105. 4 Kelch repeats span residues lysine 163–glycine 211, arginine 212–valine 258, lysine 263–valine 302, and leucine 305–alanine 349.

This chain is Putative F-box/kelch-repeat protein At2g29800, found in Arabidopsis thaliana (Mouse-ear cress).